Reading from the N-terminus, the 392-residue chain is MPNFKSKKIKEINLPYSKDDVEFLWFAKNDNVSLIYTKVQEESFFLQIKKAQNGFVIKGDKHTKPSKIGYLQKALKIFKEGFCEDIINEAFGLKNNALIEKTPFIVDNFDELLSKLQGKIYIEIGFGSGRHLLYQAKENPNVLILGVEIYNPALTQVAKLAKAQNVNNILLIQSDARLLLSVLKSKSVEKIFLHFPVPWGKKPHRRVIGKDFCKECARVLVQNGRFELRTDSFEYFNFTLEQFLTFPAPKFSLRKNENLEISSKYEDRWKKQEKNIYDLWVWNFNQECQNYELNEFNLSSVEFSKEDLKKIEQNFKNITIKKDDFFLHFESIYKQDENLLLKVAFGAFNKSEHCYLHLDKTIDFAFKEPFKIQENIKAINELKEILKVQFKI.

3 residues coordinate S-adenosyl-L-methionine: Glu123, Glu148, and Asp175. 2 residues coordinate substrate: Lys201 and Asp231.

Belongs to the class I-like SAM-binding methyltransferase superfamily. TrmB family.

The catalysed reaction is guanosine(46) in tRNA + S-adenosyl-L-methionine = N(7)-methylguanosine(46) in tRNA + S-adenosyl-L-homocysteine. Its pathway is tRNA modification; N(7)-methylguanine-tRNA biosynthesis. Functionally, catalyzes the formation of N(7)-methylguanine at position 46 (m7G46) in tRNA. The sequence is that of tRNA (guanine-N(7)-)-methyltransferase from Campylobacter jejuni subsp. doylei (strain ATCC BAA-1458 / RM4099 / 269.97).